The following is a 214-amino-acid chain: Large ribosomal subunit protein uL29m (214 aa).

Belongs to the universal ribosomal protein uL29 family. As to quaternary structure, component of the mitochondrial large ribosomal subunit. Mature mitochondrial ribosomes consist of a small (37S) and a large (54S) subunit. The 37S subunit contains at least 33 different proteins and 1 molecule of RNA (15S). The 54S subunit contains at least 45 different proteins and 1 molecule of RNA (21S).

It localises to the mitochondrion. This chain is Large ribosomal subunit protein uL29m (mrpl4), found in Aspergillus terreus (strain NIH 2624 / FGSC A1156).